Consider the following 502-residue polypeptide: Probable malate:quinone oxidoreductase (502 aa).

It belongs to the MQO family. FAD serves as cofactor.

It carries out the reaction (S)-malate + a quinone = a quinol + oxaloacetate. It participates in carbohydrate metabolism; tricarboxylic acid cycle; oxaloacetate from (S)-malate (quinone route): step 1/1. The protein is Probable malate:quinone oxidoreductase of Synechococcus sp. (strain CC9902).